The chain runs to 1119 residues: Protein translocase subunit SecA (1119 aa).

Residues glutamine 175, 213–217 (GEGKT), and aspartate 714 contribute to the ATP site. 4 residues coordinate Zn(2+): cysteine 1106, cysteine 1108, cysteine 1117, and cysteine 1118.

The protein belongs to the SecA family. As to quaternary structure, monomer and homodimer. Part of the essential Sec protein translocation apparatus which comprises SecA, SecYEG and auxiliary proteins SecDF. Other proteins may also be involved. Zn(2+) serves as cofactor.

The protein localises to the cell inner membrane. It is found in the cytoplasm. The catalysed reaction is ATP + H2O + cellular proteinSide 1 = ADP + phosphate + cellular proteinSide 2.. In terms of biological role, part of the Sec protein translocase complex. Interacts with the SecYEG preprotein conducting channel. Has a central role in coupling the hydrolysis of ATP to the transfer of proteins into and across the cell membrane, serving as an ATP-driven molecular motor driving the stepwise translocation of polypeptide chains across the membrane. The chain is Protein translocase subunit SecA from Azobacteroides pseudotrichonymphae genomovar. CFP2.